A 666-amino-acid polypeptide reads, in one-letter code: Transketolase (666 aa).

His-26 is a substrate binding site. Residues His-66 and 114–116 (GPL) each bind thiamine diphosphate. Asp-155 provides a ligand contact to Mg(2+). Thiamine diphosphate contacts are provided by Gly-156 and Asn-185. Mg(2+)-binding residues include Asn-185 and Ile-187. Substrate contacts are provided by His-261, Arg-358, and Ser-385. Position 261 (His-261) interacts with thiamine diphosphate. Glu-411 functions as the Proton donor in the catalytic mechanism. Phe-437 is a thiamine diphosphate binding site. The substrate site is built by His-461, Asp-469, and Arg-520.

This sequence belongs to the transketolase family. As to quaternary structure, homodimer. Requires Mg(2+) as cofactor. It depends on Ca(2+) as a cofactor. Mn(2+) is required as a cofactor. Co(2+) serves as cofactor. The cofactor is thiamine diphosphate.

It carries out the reaction D-sedoheptulose 7-phosphate + D-glyceraldehyde 3-phosphate = aldehydo-D-ribose 5-phosphate + D-xylulose 5-phosphate. Catalyzes the transfer of a two-carbon ketol group from a ketose donor to an aldose acceptor, via a covalent intermediate with the cofactor thiamine pyrophosphate. This Buchnera aphidicola subsp. Baizongia pistaciae (strain Bp) protein is Transketolase (tkt).